An 869-amino-acid chain; its full sequence is NACHT, LRR and PYD domains-containing protein 6 (869 aa).

Positions 37 to 128 (KLRDAPLDGR…REHVLRQHAK (92 aa)) constitute a Pyrin domain. The 318-residue stretch at 194–511 (LTVVLQGPAG…EFLAALSYLL (318 aa)) folds into the NACHT domain. 200 to 207 (GPAGIGKT) serves as a coordination point for ATP. Residues 350 to 354 (KDKKK) are disordered. One copy of the LRR 1 repeat lies at 460-485 (EEDLEKLKLRGSQVQTIFLNKKEIPG). The segment at 577–608 (VQGQSHPKGPPVGAKKTAELEDIEDAEEEEEE) is disordered. Residues 596–608 (LEDIEDAEEEEEE) are compositionally biased toward acidic residues. LRR repeat units lie at residues 635-658 (LSSLPEIVLERVRLTRMDLEVLNY) and 837-860 (TLSLTSVELSENSLRDLQAVKTSK).

Belongs to the NLRP family. Homomultimer; forms the NLRP6 inflammasome polymeric complex, a filament composed of homopolymers in response to pathogens and other damage-associated signals. The core of NLRP6 inflammasomes consists of a signal sensor component (NLRP6), an adapter (PYCARD/ASC), which recruits effector pro-inflammatory caspases (CASP1 and CASP4). Interacts (via pyrin domain) with PYCARD/ASC (via pyrin domain); interaction takes place following NLRP6 activation and formation of liquid-liquid phase separation (LLPS), initiating nucleation which greatly enhances further addition of soluble PYCARD/ASC molecules to the speck in a prion-like polymerization process. Clustered PYCARD/ASC nucleates the formation of CASP1 (or possibly CASP4) filaments through the interaction of their respective CARD domains, acting as a platform for CASP1 polymerization. CASP1 filament formation increases local enzyme concentration, resulting in trans-autocleavage and activation. Active CASP1 then processes IL1B and IL18 precursors, leading to the release of mature cytokines in the extracellular milieu and inflammatory response. Interacts with DHX15. Polyubiquitinated with 'Lys-63'-linked chains, promoting the interaction with PYCARD/ASC and formation of the NLRP6 inflammasome. Deubiquitination by CYLD decreases the interaction with PYCARD/ASC. Highly expressed in the gastrointestinal tract, predominantly in colonic myofibroblasts and in colonic epithelial and endothelial cells. Within the intestinal mucosa, highly expressed by goblet cells. Also expressed in hepatocytes and in immune cells, including CD4(+) and CD8(+) T-cells, dendritic cells, mastocytes and peritoneal macrophages, as well as in lung, kidney, bladder and gonads.

Its subcellular location is the cytoplasm. It localises to the inflammasome. The protein localises to the cell membrane. It is found in the nucleus membrane. Functionally, acts as the sensor component of the NLRP6 inflammasome, which mediates inflammasome activation in response to various pathogen-associated signals, leading to maturation and secretion of IL1B and IL18. Inflammasomes are supramolecular complexes that assemble in the cytosol in response to pathogens and other damage-associated signals and play critical roles in innate immunity and inflammation. Acts as a recognition receptor (PRR): recognizes and binds specific pathogens and other damage-associated signals, such as lipoteichoic acid (LTA), a cell-wall component of Gram-positive bacteria, or double stranded RNA (dsRNA). May also recognize and bind lipopolysaccharide (LPS), a major component of the outer membrane of Gram-negative bacteria; however, LPS is probably not a major activator of the NLRP6 inflammasome. Following LTA- or dsRNA-binding, NLRP6 undergoes liquid-liquid phase separation (LLPS), enhancing multivalent interactions, an essential step for the formation of the NLRP6 inflammasome polymeric complex. The NLRP6 inflammasome acts by promoting recruitment of effector pro-inflammatory caspases (CASP1 and/or CASP4) that catalyze maturation and secretion of IL1B and IL18 in the extracellular milieu. The NLRP6 inflammasome plays a central role in the maintenance of epithelial integrity and host defense against microbial infections in the intestine. Required to restrict infection against Gram-positive bacteria by recognizing lipoteichoic acid (LTA), leading to recruitment of CASP4 and CASP1, and subsequent maturation and secretion of IL1B and IL18. Involved in intestinal antiviral innate immunity together with DHX15: recognizes and binds viral dsRNA to restrict infection by enteric viruses through the interferon pathway and GSDMD-dependent release of IL18. Required to prevent infection by the apicomplexan parasite C.tyzzeri in enterocytes by promoting GSDMD-dependent release of IL18. The NLRP6 inflammasome may also regulate the gut microbiota composition by acting as a sensor of microbiota-associated metabolites to form a PYCARD/ASC-dependent inflammasome for downstream IL18 release and secretion of antimicrobial peptides. Its role in the regulation of the gut microbiota composition is however subject to discussion. Essential for gut mucosal self-renewal and proliferation. Regulate mucus secretion in an inflammasome- and autophagy-dependent manner to prevent invasion by enteric bacteria. During systemic bacterial infections, the NLRP6 inflammasome negatively regulates neutrophil recruitment and neutrophil extracellular traps (NETs) formation. May promote peripheral nerve recovery following injury via an inflammasome-independent mechanism. This is NACHT, LRR and PYD domains-containing protein 6 from Mus musculus (Mouse).